We begin with the raw amino-acid sequence, 50 residues long: MPQLVPFYFVNEITFTFIILAITVYILSKYILPRFVRLFLSRTFISKLLG.

A helical transmembrane segment spans residues 13 to 32 (ITFTFIILAITVYILSKYIL).

Belongs to the ATPase protein 8 family. F-type ATPases have 2 components, CF(1) - the catalytic core - and CF(0) - the membrane proton channel.

It is found in the mitochondrion membrane. In terms of biological role, mitochondrial membrane ATP synthase (F(1)F(0) ATP synthase or Complex V) produces ATP from ADP in the presence of a proton gradient across the membrane which is generated by electron transport complexes of the respiratory chain. F-type ATPases consist of two structural domains, F(1) - containing the extramembraneous catalytic core and F(0) - containing the membrane proton channel, linked together by a central stalk and a peripheral stalk. During catalysis, ATP synthesis in the catalytic domain of F(1) is coupled via a rotary mechanism of the central stalk subunits to proton translocation. Part of the complex F(0) domain. Minor subunit located with subunit a in the membrane. The chain is ATP synthase protein 8 (ATP8) from Podospora anserina (strain S / ATCC MYA-4624 / DSM 980 / FGSC 10383) (Pleurage anserina).